The sequence spans 358 residues: Vascular endothelial growth factor D (358 aa).

The signal sequence occupies residues 1 to 21 (MYGEWGMGNILMMFHVYLVQG). The propeptide occupies 22-93 (FRSEHGPVKD…SRSASHRSTR (72 aa)). Intrachain disulfides connect Cys116–Cys158, Cys147–Cys194, and Cys151–Cys196. 2 N-linked (GlcNAc...) asparagine glycosylation sites follow: Asn160 and Asn190. The propeptide occupies 211-358 (SIQTPEEDEC…AQGLYSQENP (148 aa)). One copy of the 1; approximate repeat lies at 227-242 (CPIDMLWDNTKCKCVL). Residues 227-323 (CPIDMLWDNT…PDTCSCEDRC (97 aa)) are 4 X 16 AA repeats of C-X(10)-C-X-C-X(1,3)-C. Repeat copies occupy residues 263 to 278 (CGPH…ECVC), 282 to 298 (CPGD…CFEC), and 306 to 323 (CQKH…EDRC). Asn292 carries N-linked (GlcNAc...) asparagine glycosylation.

It belongs to the PDGF/VEGF growth factor family. Homodimer; non-covalent and antiparallel. Undergoes a complex proteolytic maturation which generates a variety of processed secreted forms with increased activity toward VEGFR-3 and VEGFR-2. VEGF-D first form an antiparallel homodimer linked by disulfide bonds before secretion. The fully processed VEGF-D is composed mostly of two VEGF homology domains (VHDs) bound by non-covalent interactions. As to expression, highly expressed in fetal and adult lung.

The protein resides in the secreted. Growth factor active in angiogenesis, lymphangiogenesis and endothelial cell growth, stimulating their proliferation and migration and also has effects on the permeability of blood vessels. May function in the formation of the venous and lymphatic vascular systems during embryogenesis, and also in the maintenance of differentiated lymphatic endothelium in adults. Binds and activates VEGFR-3 (Flt4) receptor. This Mus musculus (Mouse) protein is Vascular endothelial growth factor D.